We begin with the raw amino-acid sequence, 82 residues long: Sec-independent protein translocase protein TatA (82 aa).

Residues 1–21 (MGSFSIWHWLIVLLIVVMVFG) form a helical membrane-spanning segment. Positions 46 to 82 (GASTDDSATTSAPAGQVTNNSTAADKTTIDVEAKHKS) are disordered. Polar residues predominate over residues 49 to 70 (TDDSATTSAPAGQVTNNSTAAD). Basic and acidic residues predominate over residues 72–82 (TTIDVEAKHKS).

Belongs to the TatA/E family. The Tat system comprises two distinct complexes: a TatABC complex, containing multiple copies of TatA, TatB and TatC subunits, and a separate TatA complex, containing only TatA subunits. Substrates initially bind to the TatABC complex, which probably triggers association of the separate TatA complex to form the active translocon.

Its subcellular location is the cell inner membrane. In terms of biological role, part of the twin-arginine translocation (Tat) system that transports large folded proteins containing a characteristic twin-arginine motif in their signal peptide across membranes. TatA could form the protein-conducting channel of the Tat system. This is Sec-independent protein translocase protein TatA from Acidovorax sp. (strain JS42).